Reading from the N-terminus, the 241-residue chain is Uridylate kinase (241 aa).

Residue 15–18 (KLSG) coordinates ATP. Residues 23 to 28 (GSEGFG) form an involved in allosteric activation by GTP region. A UMP-binding site is contributed by G57. The ATP site is built by G58 and R62. UMP-binding positions include D77 and 138 to 145 (TGNPFFTT). T165, F171, and D174 together coordinate ATP.

Belongs to the UMP kinase family. As to quaternary structure, homohexamer.

It is found in the cytoplasm. It carries out the reaction UMP + ATP = UDP + ADP. It functions in the pathway pyrimidine metabolism; CTP biosynthesis via de novo pathway; UDP from UMP (UMPK route): step 1/1. With respect to regulation, allosterically activated by GTP. Inhibited by UTP. In terms of biological role, catalyzes the reversible phosphorylation of UMP to UDP. In Klebsiella pneumoniae subsp. pneumoniae (strain ATCC 700721 / MGH 78578), this protein is Uridylate kinase.